The chain runs to 1629 residues: MNFKILPIAIDLGVKNTGVFSAFYQKGTSLERLDNKNGKVYELSKDSYTLLMNNRTARRHQRRGIDRKQLVKRLFKLIWTEQLNLEWDKDTQQAISFLFNRRGFSFITDGYSPEYLNIVPEQVKAILMDIFDDYNGEDDLDSYLKLATEQESKISEIYNKLMQKILEFKLMKLCTDIKDDKVSTKTLKEITSYEFELLADYLANYSESLKTQKFSYTDKQGNLKELSYYHHDKYNIQEFLKRHATINDRILDTLLTDDLDIWNFNFEKFDFDKNEEKLQNQEDKDHIQAHLHHFVFAVNKIKSEMASGGRHRSQYFQEITNVLDENNHQEGYLKNFCENLHNKKYSNLSVKNLVNLIGNLSNLELKPLRKYFNDKIHAKADHWDEQKFTETYCHWILGEWRVGVKDQDKKDGAKYSYKDLCNELKQKVTKAGLVDFLLELDPCRTIPPYLDNNNRKPPKCQSLILNPKFLDNQYPNWQQYLQELKKLQSIQNYLDSFETDLKVLKSSKDQPYFVEYKSSNQQIASGQRDYKDLDARILQFIFDRVKASDELLLNEIYFQAKKLKQKASSELEKLESSKKLDEVIANSQLSQILKSQHTNGIFEQGTFLHLVCKYYKQRQRARDSRLYIMPEYRYDKKLHKYNNTGRFDDDNQLLTYCNHKPRQKRYQLLNDLAGVLQVSPNFLKDKIGSDDDLFISKWLVEHIRGFKKACEDSLKIQKDNRGLLNHKINIARNTKGKCEKEIFNLICKIEGSEDKKGNYKHGLAYELGVLLFGEPNEASKPEFDRKIKKFNSIYSFAQIQQIAFAERKGNANTCAVCSADNAHRMQQIKITEPVEDNKDKIILSAKAQRLPAIPTRIVDGAVKKMATILAKNIVDDNWQNIKQVLSAKHQLHIPIITESNAFEFEPALADVKGKSLKDRRKKALERISPENIFKDKNNRIKEFAKGISAYSGANLTDGDFDGAKEELDHIIPRSHKKYGTLNDEANLICVTRGDNKNKGNRIFCLRDLADNYKLKQFETTDDLEIEKKIADTIWDANKKDFKFGNYRSFINLTPQEQKAFRHALFLADENPIKQAVIRAINNRNRTFVNGTQRYFAEVLANNIYLRAKKENLNTDKISFDYFGIPTIGNGRGIAEIRQLYEKVDSDIQAYAKGDKPQASYSHLIDAMLAFCIAADEHRNDGSIGLEIDKNYSLYPLDKNTGEVFTKDIFSQIKITDNEFSDKKLVRKKAIEGFNTHRQMTRDGIYAENYLPILIHKELNEVRKGYTWKNSEEIKIFKGKKYDIQQLNNLVYCLKFVDKPISIDIQISTLEELRNILTTNNIAATAEYYYINLKTQKLHEYYIENYNTALGYKKYSKEMEFLRSLAYRSERVKIKSIDDVKQVLDKDSNFIIGKITLPFKKEWQRLYREWQNTTIKDDYEFLKSFFNVKSITKLHKKVRKDFSLPISTNEGKFLVKRKTWDNNFIYQILNDSDSRADGTKPFIPAFDISKNEIVEAIIDSFTSKNIFWLPKNIELQKVDNKNIFAIDTSKWFEVETPSDLRDIGIATIQYKIDNNSRPKVRVKLDYVIDDDSKINYFMNHSLLKSRYPDKVLEILKQSTIIEFESSGFNKTIKEMLGMKLAGIYNETSNN.

The segment at 1-51 is ruvC-I; that stretch reads MNFKILPIAIDLGVKNTGVFSAFYQKGTSLERLDNKNGKVYELSKDSYTLL. Aspartate 11 (for RuvC-like nuclease domain) is an active-site residue. Aspartate 11 is a Mn(2+) binding site. An ARM region spans residues 55–73; that stretch reads RTARRHQRRGIDRKQLVKR. The recognition domain (REC) stretch occupies residues 83 to 858; the sequence is LNLEWDKDTQ…RLPAIPTRIV (776 aa). Position 460 (cysteine 460) interacts with Zn(2+). Residues 555–582 adopt a coiled-coil conformation; sequence EIYFQAKKLKQKASSELEKLESSKKLDE. Residues cysteine 657, cysteine 814, and cysteine 817 each contribute to the Zn(2+) site. The tract at residues 858 to 899 is ruvC-II; sequence VDGAVKKMATILAKNIVDDNWQNIKQVLSAKHQLHIPIITES. Mg(2+) is bound by residues aspartate 876 and asparagine 880. The region spanning 897 to 1046 is the HNH Cas9-type domain; sequence TESNAFEFEP…NKKDFKFGNY (150 aa). The active-site Proton acceptor for HNH nuclease domain is the asparagine 995. Residues 1088-1224 are ruvC-III; sequence VNGTQRYFAE…TDNEFSDKKL (137 aa). Histidine 1162 is a Mn(2+) binding site. The PAM-binding motif lies at 1473–1474; sequence SR. The PAM-interacting domain (PI) stretch occupies residues 1476-1629; sequence DGTKPFIPAF…AGIYNETSNN (154 aa). RNA contacts are provided by arginine 1556 and arginine 1585.

The protein belongs to the CRISPR-associated protein Cas9 family. Subtype II-B subfamily. In terms of assembly, monomer. Binds crRNA and tracrRNA. The cofactor is Mg(2+). Zn(2+) is required as a cofactor.

Functionally, CRISPR (clustered regularly interspaced short palindromic repeat) is an adaptive immune system that provides protection against mobile genetic elements (viruses, transposable elements and conjugative plasmids). CRISPR clusters contain spacers, sequences complementary to antecedent mobile elements, and target invading nucleic acids. CRISPR clusters are transcribed and processed into CRISPR RNA (crRNA). In type II CRISPR systems correct processing of pre-crRNA requires a trans-encoded small RNA (tracrRNA), endogenous ribonuclease 3 (rnc) and this protein. The tracrRNA serves as a guide for ribonuclease 3-aided processing of pre-crRNA. Subsequently Cas9/crRNA/tracrRNA endonucleolytically cleaves linear or circular dsDNA target complementary to the spacer; Cas9 is inactive in the absence of the 2 guide RNAs (gRNA). Cas9 recognizes a short motif in the CRISPR repeat sequences (the PAM or protospacer adjacent motif) to help distinguish self versus nonself, as targets within the bacterial CRISPR locus do not have PAMs. PAM recognition is also required for catalytic activity. Cuts target DNA when Cas9 and gRNAs are mixed. In terms of biological role, plays a role in repression of expression of endogenous bacterial lipoprotein FTN_1103. Cas9 plays a possibly non-enzymatic role in the degradation of FTN_1103 mRNA, which is dependent on formation of an RNA:RNA complex of tracrRNA and scaRNA (the latter is not found in all type II CRISPR-Cas systems). This chain is CRISPR-associated endonuclease Cas9 (cas9), found in Francisella tularensis subsp. novicida (strain U112).